We begin with the raw amino-acid sequence, 306 residues long: Recombination-associated protein RdgC (306 aa).

It belongs to the RdgC family.

Its subcellular location is the cytoplasm. The protein localises to the nucleoid. May be involved in recombination. The protein is Recombination-associated protein RdgC of Pseudomonas aeruginosa (strain LESB58).